Here is a 128-residue protein sequence, read N- to C-terminus: Large ribosomal subunit protein bL21 (128 aa).

A disordered region spans residues 104–128; sequence GKSPSVGPRPKRVKAEPAPAADAAE. The span at 119 to 128 shows a compositional bias: low complexity; that stretch reads EPAPAADAAE.

Belongs to the bacterial ribosomal protein bL21 family. As to quaternary structure, part of the 50S ribosomal subunit. Contacts protein L20.

Functionally, this protein binds to 23S rRNA in the presence of protein L20. In Rhodopseudomonas palustris (strain HaA2), this protein is Large ribosomal subunit protein bL21.